Consider the following 352-residue polypeptide: DNA polymerase IV (352 aa).

Residues 7–187 (IIHIDMDCFY…LSLKKIPGIG (181 aa)) enclose the UmuC domain. Mg(2+)-binding residues include Asp-11 and Asp-105. Glu-106 is a catalytic residue.

Belongs to the DNA polymerase type-Y family. In terms of assembly, monomer. Mg(2+) is required as a cofactor.

It is found in the cytoplasm. The catalysed reaction is DNA(n) + a 2'-deoxyribonucleoside 5'-triphosphate = DNA(n+1) + diphosphate. Functionally, poorly processive, error-prone DNA polymerase involved in untargeted mutagenesis. Copies undamaged DNA at stalled replication forks, which arise in vivo from mismatched or misaligned primer ends. These misaligned primers can be extended by PolIV. Exhibits no 3'-5' exonuclease (proofreading) activity. May be involved in translesional synthesis, in conjunction with the beta clamp from PolIII. This chain is DNA polymerase IV, found in Colwellia psychrerythraea (strain 34H / ATCC BAA-681) (Vibrio psychroerythus).